The primary structure comprises 1322 residues: BRCA2-interacting transcriptional repressor EMSY (1322 aa).

Residues 1 to 478 form an interaction with BRCA2 region; that stretch reads MPVVWPTLLD…LPKPVTATLP (478 aa). In terms of domain architecture, ENT spans 16–100; it reads CKRILRKLEL…EWSIEGRRLV (85 aa). An interaction with ZMYND11 region spans residues 104 to 108; that stretch reads PRLVP. The segment covering 148-162 has biased composition (low complexity); it reads STTSTPTSTPVPSGS. 2 disordered regions span residues 148–178 and 192–215; these read STTS…ASNV and VSCS…SSPV. Threonine 207 is subject to Phosphothreonine. Serine 209 and serine 213 each carry phosphoserine. O-linked (GlcNAc) serine glycans are attached at residues serine 228 and serine 236. Phosphoserine is present on serine 238. The O-linked (GlcNAc) threonine glycan is linked to threonine 271. Over residues 417-437 the composition is skewed to low complexity; the sequence is QQTQQQVAQPSPVSHQQQPQQ. Residues 417 to 444 form a disordered region; the sequence is QQTQQQVAQPSPVSHQQQPQQSPLPPGI. O-linked (GlcNAc) threonine glycans are attached at residues threonine 501 and threonine 506. O-linked (GlcNAc) serine glycosylation occurs at serine 557. Positions 698–707 are enriched in polar residues; it reads VAEAGNSSIQ. The interval 698–736 is disordered; that stretch reads VAEAGNSSIQEGKEEPQNYTDSSSSSTESSQSSQDSQPV. Low complexity predominate over residues 717 to 734; sequence TDSSSSSTESSQSSQDSQ. Phosphoserine occurs at positions 818 and 821. An O-linked (GlcNAc) threonine glycan is attached at threonine 1120. Residue serine 1136 is modified to Phosphoserine. The span at 1205–1223 shows a compositional bias: polar residues; sequence QKCRESCSSPSTVGSSLTT. Disordered stretches follow at residues 1205 to 1231 and 1290 to 1322; these read QKCR…PPAV and QLDD…AERS. Positions 1291–1310 are enriched in acidic residues; the sequence is LDDEETAMEQDIDSSTEDGT. A compositionally biased stretch (polar residues) spans 1312-1322; that stretch reads PSPSQSSAERS.

As to quaternary structure, homodimer. Interacts with the transactivation domain of BRCA2. Interacts with CBX1 (via chromoshadow domain). Interacts with ZMYND11. Does not interact with CBX3 or CBX5. Component of a nuclear receptor-mediated transcription complex composed of at least ZNF335, CCAR2 and EMSY; the complex stimulates the transcription of nuclear receptor target genes such as SOX9 and HOXA1. Within the complex interacts with CCAR2 and ZNF335. Components of this complex may associate with components of a histone methylation complex to form a complex at least composed of ZNF335, HCFC1, CCAR2, EMSY, MKI67, RBBP5, ASH2L and WDR5. Within this complex, interacts with ASH2L and RBBP5. O-glycosylated during cytokinesis at sites identical or close to phosphorylation sites, this interferes with the phosphorylation status.

It is found in the nucleus. Its function is as follows. Regulator which is able to repress transcription, possibly via its interaction with a multiprotein chromatin remodeling complex that modifies the chromatin. Its interaction with BRCA2 suggests that it may play a central role in the DNA repair function of BRCA2. Mediates ligand-dependent transcriptional activation by nuclear hormone receptors. The chain is BRCA2-interacting transcriptional repressor EMSY from Homo sapiens (Human).